A 176-amino-acid polypeptide reads, in one-letter code: MIDDDGYRPNVGIVICNRQGQVLWARRYGQHSWQFPQGGINPGESPEQAMYRELFEEVGLSRKDVKILASTRNWLRYKLPKRLVRWDTKPVCIGQKQRWFLLQLTSNDKDINVQQSKTPEFDGWRWVSYWYPVRQVVSFKRDVYRRVMKEFAPVVMPLQEQVSMSRPSYGYRRKRY.

The region spanning 6-149 (GYRPNVGIVI…KRDVYRRVMK (144 aa)) is the Nudix hydrolase domain. Positions 38–59 (GGINPGESPEQAMYRELFEEVG) match the Nudix box motif.

The protein belongs to the Nudix hydrolase family. RppH subfamily. Requires a divalent metal cation as cofactor.

Accelerates the degradation of transcripts by removing pyrophosphate from the 5'-end of triphosphorylated RNA, leading to a more labile monophosphorylated state that can stimulate subsequent ribonuclease cleavage. The chain is RNA pyrophosphohydrolase from Proteus mirabilis (strain HI4320).